Here is a 677-residue protein sequence, read N- to C-terminus: DNA ligase (677 aa).

Residues 43 to 47, 92 to 93, and Glu122 contribute to the NAD(+) site; these read DHVYD and SM. Lys124 (N6-AMP-lysine intermediate) is an active-site residue. NAD(+) contacts are provided by Arg145, Glu179, Lys295, and Lys319. 4 residues coordinate Zn(2+): Cys413, Cys416, Cys431, and Cys436. A BRCT domain is found at 599 to 677; that stretch reads TSDSYFNGKT…EADLDNYLAQ (79 aa).

Belongs to the NAD-dependent DNA ligase family. LigA subfamily. Mg(2+) is required as a cofactor. Requires Mn(2+) as cofactor.

The catalysed reaction is NAD(+) + (deoxyribonucleotide)n-3'-hydroxyl + 5'-phospho-(deoxyribonucleotide)m = (deoxyribonucleotide)n+m + AMP + beta-nicotinamide D-nucleotide.. Its function is as follows. DNA ligase that catalyzes the formation of phosphodiester linkages between 5'-phosphoryl and 3'-hydroxyl groups in double-stranded DNA using NAD as a coenzyme and as the energy source for the reaction. It is essential for DNA replication and repair of damaged DNA. The protein is DNA ligase of Latilactobacillus sakei subsp. sakei (strain 23K) (Lactobacillus sakei subsp. sakei).